The chain runs to 227 residues: Adapter protein MecA 1 (227 aa).

Belongs to the MecA family. As to quaternary structure, homodimer.

Its function is as follows. Enables the recognition and targeting of unfolded and aggregated proteins to the ClpC protease or to other proteins involved in proteolysis. Acts negatively in the development of competence by binding ComK and recruiting it to the ClpCP protease. When overexpressed, inhibits sporulation. Also involved in Spx degradation by ClpC. In Bacillus anthracis, this protein is Adapter protein MecA 1 (mecA1).